The chain runs to 443 residues: dTDP-4-dehydro-6-deoxy-alpha-D-glucopyranose 2,3-dehydratase (443 aa).

Residues Trp35, 118-122 (TFSNY), Ser157, Trp260, Arg325, 341-343 (QCN), 346-347 (NL), and 377-380 (EGGR) each bind dTDP-4-dehydro-6-deoxy-alpha-D-glucose.

It belongs to the hexose 2,3-dehydratase family. In terms of assembly, homodimer.

The enzyme catalyses dTDP-4-dehydro-6-deoxy-alpha-D-glucose = dTDP-3,4-didehydro-2,6-dideoxy-alpha-D-glucose + H2O. Its pathway is antibiotic biosynthesis; granaticin biosynthesis. Involved in the biosynthesis of the 2,6-deoxysugar, dTDP-L-rhodinose, attached to the benzoisochromane quinone chromophore to produce the aglycone antibiotics granaticin and granaticin B. Catalyzes the removal of the hydroxyl group at position C-2 of the hexose ring of dTDP-4-dehydro-6-deoxy-alpha-D-glucopyranose, and the oxidation of the hydroxyl group at position C-3 to form a carbonyl functionality. The product of the reaction, dTDP-2,6-dideoxy-D-glycero-hex-2-enos-4-ulose, is a highly unstable diketosugar, which spontaneously forms dTDP-3,4-didehydro-2,6-dideoxy-alpha-D-glucose. This is dTDP-4-dehydro-6-deoxy-alpha-D-glucopyranose 2,3-dehydratase from Streptomyces violaceoruber.